Reading from the N-terminus, the 333-residue chain is Transcription initiation factor IIB (333 aa).

The TFIIB-type zinc-finger motif lies at 33–64 (EVYRCPICGNDKFIYNYERGEVVCIVCGAVVQ). The Zn(2+) site is built by cysteine 37, cysteine 40, cysteine 56, and cysteine 59. 2 tandem repeats follow at residues 149 to 232 (QELE…LREL) and 243 to 324 (LYIS…ELAK).

The protein belongs to the TFIIB family.

Stabilizes TBP binding to an archaeal box-A promoter. Also responsible for recruiting RNA polymerase II to the pre-initiation complex (DNA-TBP-TFIIB). This Pyrobaculum neutrophilum (strain DSM 2338 / JCM 9278 / NBRC 100436 / V24Sta) (Thermoproteus neutrophilus) protein is Transcription initiation factor IIB.